We begin with the raw amino-acid sequence, 289 residues long: Shikimate dehydrogenase (NADP(+)) (289 aa).

Shikimate is bound by residues serine 19–serine 21 and threonine 66. Lysine 70 (proton acceptor) is an active-site residue. Shikimate contacts are provided by asparagine 91 and aspartate 106. Residues glycine 131–alanine 135, asparagine 155–lysine 160, and leucine 229 contribute to the NADP(+) site. Tyrosine 231 contacts shikimate. Residue glycine 252 coordinates NADP(+).

It belongs to the shikimate dehydrogenase family. Homodimer.

The enzyme catalyses shikimate + NADP(+) = 3-dehydroshikimate + NADPH + H(+). It participates in metabolic intermediate biosynthesis; chorismate biosynthesis; chorismate from D-erythrose 4-phosphate and phosphoenolpyruvate: step 4/7. Functionally, involved in the biosynthesis of the chorismate, which leads to the biosynthesis of aromatic amino acids. Catalyzes the reversible NADPH linked reduction of 3-dehydroshikimate (DHSA) to yield shikimate (SA). The protein is Shikimate dehydrogenase (NADP(+)) of Halothermothrix orenii (strain H 168 / OCM 544 / DSM 9562).